A 276-amino-acid chain; its full sequence is S-adenosylmethionine decarboxylase proenzyme (276 aa).

Residue serine 126 is the Schiff-base intermediate with substrate; via pyruvic acid of the active site. Serine 126 bears the Pyruvic acid (Ser); by autocatalysis mark. Histidine 131 functions as the Proton acceptor; for processing activity in the catalytic mechanism. Cysteine 154 (proton donor; for catalytic activity) is an active-site residue.

It belongs to the prokaryotic AdoMetDC family. Type 2 subfamily. As to quaternary structure, heterooctamer of four alpha and four beta chains arranged as a tetramer of alpha/beta heterodimers. It depends on pyruvate as a cofactor. In terms of processing, is synthesized initially as an inactive proenzyme. Formation of the active enzyme involves a self-maturation process in which the active site pyruvoyl group is generated from an internal serine residue via an autocatalytic post-translational modification. Two non-identical subunits are generated from the proenzyme in this reaction, and the pyruvate is formed at the N-terminus of the alpha chain, which is derived from the carboxyl end of the proenzyme. The post-translation cleavage follows an unusual pathway, termed non-hydrolytic serinolysis, in which the side chain hydroxyl group of the serine supplies its oxygen atom to form the C-terminus of the beta chain, while the remainder of the serine residue undergoes an oxidative deamination to produce ammonia and the pyruvoyl group blocking the N-terminus of the alpha chain.

The enzyme catalyses S-adenosyl-L-methionine + H(+) = S-adenosyl 3-(methylsulfanyl)propylamine + CO2. It participates in amine and polyamine biosynthesis; S-adenosylmethioninamine biosynthesis; S-adenosylmethioninamine from S-adenosyl-L-methionine: step 1/1. In terms of biological role, catalyzes the decarboxylation of S-adenosylmethionine to S-adenosylmethioninamine (dcAdoMet), the propylamine donor required for the synthesis of the polyamines spermine and spermidine from the diamine putrescine. The polypeptide is S-adenosylmethionine decarboxylase proenzyme (Alcanivorax borkumensis (strain ATCC 700651 / DSM 11573 / NCIMB 13689 / SK2)).